The primary structure comprises 147 residues: Protein archease (147 aa).

The Ca(2+) site is built by aspartate 17, aspartate 146, and isoleucine 147.

The protein belongs to the archease family.

Functionally, activates the tRNA-splicing ligase complex by facilitating the enzymatic turnover of catalytic subunit RtcB. Acts by promoting the guanylylation of RtcB, a key intermediate step in tRNA ligation. Can also alter the NTP specificity of RtcB such that ATP, dGTP or ITP is used efficiently. This Pyrobaculum neutrophilum (strain DSM 2338 / JCM 9278 / NBRC 100436 / V24Sta) (Thermoproteus neutrophilus) protein is Protein archease.